Here is a 440-residue protein sequence, read N- to C-terminus: Tryptophan synthase beta chain 2 (440 aa).

An N6-(pyridoxal phosphate)lysine modification is found at K110.

Belongs to the TrpB family. Tetramer of two alpha and two beta chains. Pyridoxal 5'-phosphate is required as a cofactor.

It catalyses the reaction (1S,2R)-1-C-(indol-3-yl)glycerol 3-phosphate + L-serine = D-glyceraldehyde 3-phosphate + L-tryptophan + H2O. It participates in amino-acid biosynthesis; L-tryptophan biosynthesis; L-tryptophan from chorismate: step 5/5. Its function is as follows. The beta subunit is responsible for the synthesis of L-tryptophan from indole and L-serine. The polypeptide is Tryptophan synthase beta chain 2 (trpB2) (Pyrococcus abyssi (strain GE5 / Orsay)).